We begin with the raw amino-acid sequence, 560 residues long: Chaperonin GroEL 2 (560 aa).

ATP contacts are provided by residues 29–32 (TLGP), Lys-50, 86–90 (DGTTT), Gly-414, and Asp-494. The interval 524–546 (EDEDDDDGGGGGGGGMPAGGAGG) is disordered. Positions 532–546 (GGGGGGGMPAGGAGG) are enriched in gly residues.

It belongs to the chaperonin (HSP60) family. As to quaternary structure, forms a cylinder of 14 subunits composed of two heptameric rings stacked back-to-back. Interacts with the co-chaperonin GroES.

The protein resides in the cytoplasm. It carries out the reaction ATP + H2O + a folded polypeptide = ADP + phosphate + an unfolded polypeptide.. Together with its co-chaperonin GroES, plays an essential role in assisting protein folding. The GroEL-GroES system forms a nano-cage that allows encapsulation of the non-native substrate proteins and provides a physical environment optimized to promote and accelerate protein folding. The chain is Chaperonin GroEL 2 from Salinibacter ruber (strain DSM 13855 / M31).